The primary structure comprises 425 residues: MTMAKLTESMTNVLEGDSMDQDVESPVAIHQPKLPKQARDDLPRHISRDRTKRKIQRYVRKDGKCNVHHGNVRETYRYLTDIFTTLVDLKWRFNLLIFVMVYTVTWLFFGMIWWLIAYIRGDMDHIEDPSWTPCVTNLNGFVSAFLFSIETETTIGYGYRVITDKCPEGIILLLIQSVLGSIVNAFMVGCMFVKISQPKKRAETLVFSTHAVISMRDGKLCLMFRVGDLRNSHIVEASIRAKLIKSKQTSEGEFIPLNQTDINVGYYTGDDRLFLVSPLIISHEINQQSPFWEISKAQLPKEELEIVVILEGMVEATGMTCQARSSYVTSEILWGYRFTPVLTLEDGFYEVDYNSFHETHETSTPSLSAKELAELANRAELPLSWSVSSKLNQHAELETEEEEKNPEELTERNGDVANLENESKV.

The Cytoplasmic segment spans residues Met-1 to Trp-91. Residues Ser-18 and Ser-25 each carry the phosphoserine modification. A helical membrane pass occupies residues Arg-92–Ile-116. Residues Ala-117 to Gly-140 lie on the Extracellular side of the membrane. The segment at residues Phe-141–Glu-152 is an intramembrane region (helical; Pore-forming). The pore-forming intramembrane region spans Thr-153–Tyr-159. The short motif at Thr-154–Tyr-159 is the Selectivity filter element. The Extracellular portion of the chain corresponds to Arg-160–Glu-168. Residues Gly-169 to Cys-190 traverse the membrane as a helical segment. Topologically, residues Met-191–Val-425 are cytoplasmic. The interval Asn-392 to Val-425 is disordered. Residues Glu-422–Val-425 carry the PDZ-binding motif.

It belongs to the inward rectifier-type potassium channel (TC 1.A.2.1) family. KCNJ6 subfamily. As to quaternary structure, associates with KCNJ3/GIRK1 or KCNJ5/GRIK4 to form a G-protein-activated heteromultimer pore-forming unit. The resulting inward current is much larger. Interacts (via PDZ-binding motif) with SNX27 (via PDZ domain); the interaction is required for recycling to the plasma membrane when endocytosed and prevent degradation in lysosomes. As to expression, pancreatic beta cells and brain.

It is found in the membrane. It catalyses the reaction K(+)(in) = K(+)(out). With respect to regulation, activated by phosphatidylinositol 4,5 biphosphate (PtdIns(4,5)P2). Inward rectifier potassium channels are characterized by a greater tendency to allow potassium to flow into the cell rather than out of it. Their voltage dependence is regulated by the concentration of extracellular potassium; as external potassium is raised, the voltage range of the channel opening shifts to more positive voltages. The inward rectification is mainly due to the blockage of outward current by internal magnesium. This potassium channel may be involved in the regulation of insulin secretion by glucose and/or neurotransmitters acting through G-protein-coupled receptors. In Rattus norvegicus (Rat), this protein is G protein-activated inward rectifier potassium channel 2 (Kcnj6).